A 115-amino-acid polypeptide reads, in one-letter code: SPbeta prophage-derived uncharacterized protein YoqS (115 aa).

The polypeptide is SPbeta prophage-derived uncharacterized protein YoqS (yoqS) (Bacillus subtilis (strain 168)).